The primary structure comprises 235 residues: Small ribosomal subunit protein uS3 (235 aa).

One can recognise a KH type-2 domain in the interval 39–107; sequence IREILHKELK…DVVINIVEIR (69 aa). The tract at residues 215–235 is disordered; that stretch reads QDKRMAESDGGGSSRPRRDAA.

This sequence belongs to the universal ribosomal protein uS3 family. Part of the 30S ribosomal subunit. Forms a tight complex with proteins S10 and S14.

Binds the lower part of the 30S subunit head. Binds mRNA in the 70S ribosome, positioning it for translation. The protein is Small ribosomal subunit protein uS3 of Rhodopseudomonas palustris (strain TIE-1).